Consider the following 296-residue polypeptide: Cutinase est1 (296 aa).

The first 35 residues, 1 to 35 (MSVTTPRREASLLSRAVAVAAAAAATVALAAPAQA), serve as a signal peptide directing secretion. A disordered region spans residues 36 to 57 (ANPYERGPNPTESMLEARSGPF). Tyr-95 is a binding site for poly(ethylene terephthalate). The active-site Nucleophile is the Ser-165. The poly(ethylene terephthalate) site is built by Met-166 and Trp-190. Residues Asp-211 and His-243 each act as charge relay system in the active site. The cysteines at positions 276 and 294 are disulfide-linked.

This sequence belongs to the AB hydrolase superfamily. In terms of assembly, monomer.

Its subcellular location is the secreted. It localises to the periplasm. It catalyses the reaction (ethylene terephthalate)(n) + H2O = (ethylene terephthalate)(n-1) + 4-[(2-hydroxyethoxy)carbonyl]benzoate + H(+). The enzyme catalyses a butanoate ester + H2O = an aliphatic alcohol + butanoate + H(+). It carries out the reaction cutin + H2O = cutin monomers.. Functionally, catalyzes the hydrolysis of cutin, a polyester that forms the structure of plant cuticle. Shows esterase activity towards p-nitrophenol-linked aliphatic esters (pNP-aliphatic esters). Capable of degrading the plastic poly(ethylene terephthalate) (PET), the most abundant polyester plastic in the world. Can also depolymerize the synthetic polyester poly(epsilon-caprolactone) (PCL). This is Cutinase est1 from Thermobifida alba (Thermomonospora alba).